Consider the following 136-residue polypeptide: Fatty acid-binding protein homolog 5 (136 aa).

Residues Arg111 and 131 to 133 (RAY) each bind a fatty acid.

This sequence belongs to the calycin superfamily. Fatty-acid binding protein (FABP) family.

This is Fatty acid-binding protein homolog 5 (lbp-5) from Caenorhabditis elegans.